Reading from the N-terminus, the 406-residue chain is MQSMRFMILALLVQFLPAWAINDPAKSAAPYHDEFPLFRSANMASPDKLSTGIGFHSFRIPAVVRTTTGRILAFAEGRRHTNQDFGDINLVYKRTKTTANNGASPSDWEPLREVVGSGAGTWGNPTPVVDDDNTIYLFLSWNGATYSQNGKDVLPDGTVTKKIDSTWEGRRHLYLTESRDDGNTWSKPVDLTKELTPDGWAWDAVGPGNGIRLTTGELVIPAMGRNIIGRGAPGNRTWSVQRLSGAGAEGTIVQTPDGKLYRNDRPSQKGYRMVARGTLEGFGAFAPDAGLPDPACQGSVLRYNSDAPARTIFLNSASGTSRRAMRVRISYDADAKKFNYGRKLEDAKVSGAGHEGGYSSMTKTGDYKIGALVESDFFNDGTGKNSYRAIIWRRFNLSWILNGPNN.

Residues 1–20 form the signal peptide; the sequence is MQSMRFMILALLVQFLPAWA. Substrate is bound by residues arginine 59, arginine 78, aspartate 84, and glutamine 148. Asparagine 235 is a glycosylation site (N-linked (GlcNAc...) asparagine). Substrate is bound by residues arginine 265, arginine 322, 322–323, 331–332, lysine 337, tyrosine 358, aspartate 376, and 376–378; these read RR, YD, and DFF. N-linked (GlcNAc...) asparagine glycosylation is present at asparagine 396.

This sequence belongs to the glycosyl hydrolase 33 family.

It carries out the reaction Hydrolysis of alpha-(2-&gt;3)-, alpha-(2-&gt;6)-, alpha-(2-&gt;8)- glycosidic linkages of terminal sialic acid residues in oligosaccharides, glycoproteins, glycolipids, colominic acid and synthetic substrates.. Its function is as follows. Sialidase is able to release sialic acid from a wide variety of natural substrates including bovine salivary mucin, colominic acid, bovine fetuin, a serum glycoprotein containing both alpha-2-6 and alpha-2-3-linkages in a ratio of about 3:2, and glycoproteins and glycolipids from thermally denatured human lung epithelial cells. Does not show any trans-sialidase activity since it is able to remove terminal sialic acid residues but is unable to catalyze their transfer to the acceptor substrate. 2-keto-3-deoxynononic acid (KDN) is the preferred substrate and A.fumigatus can utilize KDN as a sole carbon source. This Aspergillus fumigatus (strain ATCC MYA-4609 / CBS 101355 / FGSC A1100 / Af293) (Neosartorya fumigata) protein is Exo-alpha-sialidase.